We begin with the raw amino-acid sequence, 323 residues long: Lipoyl synthase (323 aa).

The [4Fe-4S] cluster site is built by Cys61, Cys66, Cys72, Cys87, Cys91, Cys94, and Ser300. Positions 73 to 289 (WDKKHATFMI…ETVAYSKGFL (217 aa)) constitute a Radical SAM core domain.

The protein belongs to the radical SAM superfamily. Lipoyl synthase family. Requires [4Fe-4S] cluster as cofactor.

The protein localises to the cytoplasm. It carries out the reaction [[Fe-S] cluster scaffold protein carrying a second [4Fe-4S](2+) cluster] + N(6)-octanoyl-L-lysyl-[protein] + 2 oxidized [2Fe-2S]-[ferredoxin] + 2 S-adenosyl-L-methionine + 4 H(+) = [[Fe-S] cluster scaffold protein] + N(6)-[(R)-dihydrolipoyl]-L-lysyl-[protein] + 4 Fe(3+) + 2 hydrogen sulfide + 2 5'-deoxyadenosine + 2 L-methionine + 2 reduced [2Fe-2S]-[ferredoxin]. It functions in the pathway protein modification; protein lipoylation via endogenous pathway; protein N(6)-(lipoyl)lysine from octanoyl-[acyl-carrier-protein]: step 2/2. In terms of biological role, catalyzes the radical-mediated insertion of two sulfur atoms into the C-6 and C-8 positions of the octanoyl moiety bound to the lipoyl domains of lipoate-dependent enzymes, thereby converting the octanoylated domains into lipoylated derivatives. The chain is Lipoyl synthase from Rhizobium etli (strain ATCC 51251 / DSM 11541 / JCM 21823 / NBRC 15573 / CFN 42).